The primary structure comprises 129 residues: Small ribosomal subunit protein bS6 (129 aa).

Residues Ser100–Glu129 are disordered. Over residues Lys104–Glu129 the composition is skewed to basic and acidic residues.

The protein belongs to the bacterial ribosomal protein bS6 family.

Its function is as follows. Binds together with bS18 to 16S ribosomal RNA. This is Small ribosomal subunit protein bS6 from Vibrio parahaemolyticus serotype O3:K6 (strain RIMD 2210633).